Here is a 1149-residue protein sequence, read N- to C-terminus: MFQTKLRNETWEDLPKMSCTTEIQAAFILSSFVTFFSGLIILLIFRLIWRSVKKWQIIKGTGIILELFTSGTIARSHVRSLHFQGQFRDHIEMLLSAQTFVGQVLVILVFVLSIGSLIIYFINSADPVGSCSSYEDKTIPIDLVFNAFFSFYFGLRFMAADDKIKFWLEMNSIVDIFTIPPTFISYYLKSNWLGLRFLRALRLLELPQILQILRAIKTSNSVKFSKLLSIILSTWFTAAGFIHLVENSGDPWLKGRNSQNISYFESIYLVMATTSTVGFGDVVAKTSLGRTFIMFFTLGSLILFANYIPEMVELFANKRKYTSSYEALKGKKFIVVCGNITVDSVTAFLRNFLRDKSGEINTEIVFLGETPPSLELETIFKCYLAYTTFISGSAMKWEDLRRVAVESAEACLIIANPLCSDSHAEDISNIMRVLSIKNYDSTTRIIIQILQSHNKVYLPKIPSWNWDTGDNIICFAELKLGFIAQGCLVPGLCTFLTSLFVEQNKKVMPKQTWKKHFLNSMKNKILTQRLSDDFAGMSFPEVARLCFLKMHLLLIAIEYKSLFTDGFCGLILNPPPQVRIRKNTLGFFIAETPKDVRRALFYCSVCHDDVFIPELITNCGCKSRSRQHITVPSVKRMKKCLKGISSRISGQDSPPRVSASTSSISNFTTRTLQHDVEQDSDQLDSSGMFHWCKPTSLDKVTLKRTGKSKYKFRNHIVACVFGDAHSAPMGLRNFVMPLRASNYTRKELKDIVFIGSLDYLQREWRFLWNFPQIYILPGCALYSGDLHAANIEQCSMCAVLSPPPQPSSNQTLVDTEAIMATLTIGSLQIDSSSDPSPSVSEETPGYTNGHNEKSNCRKVPILTELKNPSNIHFIEQLGGLEGSLQETNLHLSTAFSTGTVFSGSFLDSLLATAFYNYHVLELLQMLVTGGVSSQLEQHLDKDKVYGVADSCTSLLSGRNRCKLGLLSLHETILSDVNPRNTFGQLFCGSLDLFGILCVGLYRIIDEEELNPENKRFVITRPANEFKLLPSDLVFCAIPFSTACYKRNEEFSLQKSYEIVNKASQTTETHSDTNCPPTIDSVTETLYSPVYSYQPRTNSLSFPKQIAWNQSRTNSIISSQIPLGDNAKENERKTSDEVYDEDPFAYSEPL.

The Extracellular portion of the chain corresponds to 1-24 (MFQTKLRNETWEDLPKMSCTTEIQ). Residues 25–45 (AAFILSSFVTFFSGLIILLIF) form a helical membrane-spanning segment. Residues 46-101 (RLIWRSVKKWQIIKGTGIILELFTSGTIARSHVRSLHFQGQFRDHIEMLLSAQTFV) lie on the Cytoplasmic side of the membrane. The helical transmembrane segment at 102 to 122 (GQVLVILVFVLSIGSLIIYFI) threads the bilayer. Residues 123–138 (NSADPVGSCSSYEDKT) are Extracellular-facing. Residues 139–159 (IPIDLVFNAFFSFYFGLRFMA) form a helical membrane-spanning segment. Topologically, residues 160-163 (ADDK) are cytoplasmic. The chain crosses the membrane as a helical span at residues 164–184 (IKFWLEMNSIVDIFTIPPTFI). The Extracellular segment spans residues 185–188 (SYYL). A helical; Voltage-sensor membrane pass occupies residues 189 to 209 (KSNWLGLRFLRALRLLELPQI). The Cytoplasmic segment spans residues 210–226 (LQILRAIKTSNSVKFSK). The helical transmembrane segment at 227–247 (LLSIILSTWFTAAGFIHLVEN) threads the bilayer. Topologically, residues 248 to 259 (SGDPWLKGRNSQ) are extracellular. Positions 260 to 282 (NISYFESIYLVMATTSTVGFGDV) form an intramembrane region, pore-forming. Positions 276–279 (TVGF) match the Selectivity for potassium motif. Topologically, residues 283 to 291 (VAKTSLGRT) are extracellular. Residues 292 to 312 (FIMFFTLGSLILFANYIPEMV) form a helical membrane-spanning segment. At 313 to 1149 (ELFANKRKYT…EDPFAYSEPL (837 aa)) the chain is on the cytoplasmic side. RCK N-terminal domains follow at residues 331–473 (KKFI…DNII) and 713–884 (RNHI…EGSL). Disordered regions lie at residues 828–854 (QIDS…NEKS) and 1118–1149 (SQIP…SEPL). Low complexity predominate over residues 830-840 (DSSSDPSPSVS). Over residues 1125-1135 (NAKENERKTSD) the composition is skewed to basic and acidic residues.

The protein belongs to the potassium channel family. Calcium-activated (TC 1.A.1.3) subfamily. KCa5.1/KCNU1 sub-subfamily. Homotetramer; which constitutes the activated potassium channel. Interacts with LRRC52; this interaction changes channel gating properties, such as shifting gating to more negative potentials at a given pH. In terms of tissue distribution, testis-specific.

It is found in the cell membrane. The protein resides in the cell projection. It localises to the cilium. Its subcellular location is the flagellum membrane. The catalysed reaction is K(+)(in) = K(+)(out). With respect to regulation, regulated by changes in cytosolic pH; activated by alkalization. Activated by intracellular Ca(2+). Despite strong sequence similarity, human KCNU1 channels are significantly more sensitive to activation by internal Ca(2+) and less pH-sensitive than mouse KCNU1. VU0546110 acts as a selective inhibitor. The auxiliary subunit LRRC52 shifts the activation of KCNU1 to more negative potentials at a given pH. Testis-specific potassium channel activated by both intracellular pH and membrane voltage that mediates export of K(+). Represents the primary spermatozoan K(+) current. The channel underlies a pH-triggered membrane hyperpolarization during the process of sperm capacitation, as sperm encounter the alkaline environment near the ovum in the female reproductive tract, thereby playing an essential for male fertility. In Homo sapiens (Human), this protein is Potassium channel subfamily U member 1.